The sequence spans 224 residues: Peroxiredoxin-6 (224 aa).

The region spanning 5-169 (LLLGDEAPNF…ILRVIISLQL (165 aa)) is the Thioredoxin domain. Positions 31 to 40 (DSWGILFSHP) are required and sufficient for targeting to lysosomes and lamellar bodies. Position 44 is a phosphothreonine (T44). C47 acts as the Cysteine sulfenic acid (-SOH) intermediate; for peroxidase activity in catalysis. K63 carries the post-translational modification N6-acetyllysine. Residue Y89 is modified to Phosphotyrosine. The active-site For phospholipase activity is the D140. T177 is subject to Phosphothreonine; by MAPK. The residue at position 209 (K209) is an N6-acetyllysine; alternate. Position 209 is an N6-succinyllysine; alternate (K209).

The protein belongs to the peroxiredoxin family. Prx6 subfamily. In terms of assembly, homodimer. Interacts with GSTP1; mediates PRDX6 glutathionylation and regeneration. Interacts with APEX1. Interacts with STH. May interact with FAM168B. May interact with HTR2A. It depends on Does not need Ca(2+) as cofactor. as a cofactor. In terms of processing, irreversibly inactivated by overoxidation of Cys-47 to sulfinic acid (Cys-SO(2)H) and sulfonic acid (Cys-SO(3)H) forms upon oxidative stress. Phosphorylation at Thr-177 by MAP kinases increases the phospholipase activity of the enzyme. The phosphorylated form exhibits a greater lysophosphatidylcholine acyltransferase activity compared to the non-phosphorylated form.

It localises to the cytoplasm. The protein resides in the lysosome. It catalyses the reaction a hydroperoxide + 2 glutathione = an alcohol + glutathione disulfide + H2O. The enzyme catalyses a 1,2-diacyl-sn-glycero-3-phosphocholine + H2O = a 1-acyl-sn-glycero-3-phosphocholine + a fatty acid + H(+). It carries out the reaction a 1-acyl-sn-glycero-3-phosphocholine + an acyl-CoA = a 1,2-diacyl-sn-glycero-3-phosphocholine + CoA. The catalysed reaction is 1-hexadecanoyl-sn-glycero-3-phosphocholine + hexadecanoyl-CoA = 1,2-dihexadecanoyl-sn-glycero-3-phosphocholine + CoA. It catalyses the reaction 1,2-dihexadecanoyl-sn-glycero-3-phosphocholine + H2O = 1-hexadecanoyl-sn-glycero-3-phosphocholine + hexadecanoate + H(+). Functionally, thiol-specific peroxidase that catalyzes the reduction of hydrogen peroxide and organic hydroperoxides to water and alcohols, respectively. Can reduce H(2)O(2) and short chain organic, fatty acid, and phospholipid hydroperoxides. Also has phospholipase activity, and can therefore either reduce the oxidized sn-2 fatty acyl group of phospholipids (peroxidase activity) or hydrolyze the sn-2 ester bond of phospholipids (phospholipase activity). These activities are dependent on binding to phospholipids at acidic pH and to oxidized phospholipds at cytosolic pH. Plays a role in cell protection against oxidative stress by detoxifying peroxides and in phospholipid homeostasis. Exhibits acyl-CoA-dependent lysophospholipid acyltransferase which mediates the conversion of lysophosphatidylcholine (1-acyl-sn-glycero-3-phosphocholine or LPC) into phosphatidylcholine (1,2-diacyl-sn-glycero-3-phosphocholine or PC). Shows a clear preference for LPC as the lysophospholipid and for palmitoyl CoA as the fatty acyl substrate. The polypeptide is Peroxiredoxin-6 (PRDX6) (Bos taurus (Bovine)).